A 134-amino-acid chain; its full sequence is Small ribosomal subunit protein uS8c (134 aa).

It belongs to the universal ribosomal protein uS8 family. In terms of assembly, part of the 30S ribosomal subunit.

The protein resides in the plastid. It is found in the chloroplast. One of the primary rRNA binding proteins, it binds directly to 16S rRNA central domain where it helps coordinate assembly of the platform of the 30S subunit. This is Small ribosomal subunit protein uS8c (rps8) from Gossypium barbadense (Sea Island cotton).